The following is a 358-amino-acid chain: B3 domain-containing protein Os12g0592300 (358 aa).

The segment at residues 25–122 is a DNA-binding region (TF-B3 1); the sequence is RIRFFRLMTG…SFDVLIFDAS (98 aa). Positions 148 to 215 are disordered; that stretch reads YHLSDSEDTS…EKSDDDDEHA (68 aa). Polar residues predominate over residues 156 to 181; the sequence is TSTPSTFLVGSPHKASTSKKLNGKTK. Residues 203–215 show a composition bias toward acidic residues; that stretch reads IEEEKSDDDDEHA. Residues 252–350 constitute a DNA-binding region (TF-B3 2); that stretch reads FVTVLQAPQI…TMTVHVIGKV (99 aa).

The protein localises to the nucleus. This is B3 domain-containing protein Os12g0592300 from Oryza sativa subsp. japonica (Rice).